A 1335-amino-acid chain; its full sequence is MDGVHLGENLEDKDTEFTWEVKANDRTYHKQFKKKGFLCWRQKKYKSNAIHTAKYNIFSFLPLNLYEQFHRMSNLYFLFIIILQGIPEISTLPWFTLFAPLVCLFVIRATRDLVDDIGRHRSDKIINNRPCQILRGKSFLWKKWKNLCVGDVVCLSKDSIVPADLLLLASTEPSSLCYVETADIDGETNLKFRQALTVTHHELTSPKKMASFQGTVTCEEPNSRMHHFVGSLEWNSRKYPLDIGNLLLRGCKIRNTDTCYGLVIYAGLDTKIMKNCGKIHLKRTKLDLMMNKLVALIFLSLVIASLLLTVGFTFMVKQFKAKHYYMSPTHGRSDAMESFFIFWGFLILLSVMVPMAMFIIAEFIYLGNSIFINWDLNMYYEPLDMPAKARSTSLNDQLGQVQYIFSDKTGTLTQNIMTFKKCCINGCIYDSDDEHGTLRKRNPYAWNPFADGKLQFYNKELESLVQGRQDRAVQEFWRLLAICHTVMVQEKDNQLLYQAASPDEEALVTAARNFGYVFLSRTQDTITLVELGEERVYQVLAMMDFNSVRKRMSVLVRNPEGSICLYTKGADTVILERLRSKGVMEATTEEVLAAFAEQTLRTLCLAYKDVEEDAYKEWEPEHQEAALLLQNRAQALHQVYNKMEQNLQLLGATAIEDKLQDGVPETIKCLKKGNIKIWVLTGDKPETAVNIGFACQLLSENMIILEDKDINQVLERYWEDNVHQKAFKMMTHHNMALVINGEFLDQLLLSLRKEPRALVQNAVVDEVAQEPVVSALDFLQKRRISQMWRNAGPSLGTSHSADSKIRESPEVQRERAFVDLASKCQAVICCRVTPKQKALVVALVKKYQQVVTLAIGDGANDVNMIKTADIGVGLAGQEGMQAVQNSDYVLAQFCYLQRLLLVHGRWSYMRVCKFLRYFFYKTVASMMAQIWFSLVNGFSAQPLYEGWFLALFNLLYSTLPVLYIGLFEQDVTAEKSLKMPELYMAGQKGELFNYSIFMQAITHGTITSMINFFVTVMVSSDMSKAGSSHDYQSLGVLVAISSLLSVTLEVMLVVKYWTLLFVGAVVLSLSSYVLMTSLTQSLWMYRISPKTFPFLFADYNVLFEPCSLLLIVLNVALNVLPMLALRTIHRTVLKQRPKGEEEAPSEEVAVEPAMRHLRRGIPARRSSYAFSHREGYANLITQGTILRRQTHVDDSDGGTVCESLNPPEEDIPLQNKDSVFNPRKISILAKKRRHFFGKGSQEEVHPNTSSQTMEKQPTIHRDSETQKLPTTTSATSGKLLPSASEDEAFYSVASQYTLASQPKHTDVHSSFWKSPLWRDSASSSPSQLEVPRKQS.

Over 1–74 (MDGVHLGENL…LYEQFHRMSN (74 aa)) the chain is Cytoplasmic. The helical transmembrane segment at 75-95 (LYFLFIIILQGIPEISTLPWF) threads the bilayer. At 96–295 (TLFAPLVCLF…LDLMMNKLVA (200 aa)) the chain is on the exoplasmic loop side. Residues 296–316 (LIFLSLVIASLLLTVGFTFMV) form a helical membrane-spanning segment. Over 317–339 (KQFKAKHYYMSPTHGRSDAMESF) the chain is Cytoplasmic. A helical membrane pass occupies residues 340–360 (FIFWGFLILLSVMVPMAMFII). At 361 to 917 (AEFIYLGNSI…YMRVCKFLRY (557 aa)) the chain is on the exoplasmic loop side. The 4-aspartylphosphate intermediate role is filled by aspartate 407. The ATP site is built by aspartate 407, lysine 408, threonine 409, glutamate 504, phenylalanine 545, lysine 568, arginine 601, threonine 681, glycine 682, aspartate 683, arginine 831, and lysine 837. Residue aspartate 407 participates in Mg(2+) binding. Position 409 (threonine 409) interacts with Mg(2+). Aspartate 857 contacts Mg(2+). ATP contacts are provided by asparagine 860 and aspartate 861. Residue aspartate 861 participates in Mg(2+) binding. Residues 918–938 (FFYKTVASMMAQIWFSLVNGF) form a helical membrane-spanning segment. Residues 939–946 (SAQPLYEG) are Cytoplasmic-facing. Residues 947–967 (WFLALFNLLYSTLPVLYIGLF) traverse the membrane as a helical segment. At 968–995 (EQDVTAEKSLKMPELYMAGQKGELFNYS) the chain is on the exoplasmic loop side. A helical membrane pass occupies residues 996–1016 (IFMQAITHGTITSMINFFVTV). Topologically, residues 1017-1033 (MVSSDMSKAGSSHDYQS) are cytoplasmic. Residues 1034-1054 (LGVLVAISSLLSVTLEVMLVV) form a helical membrane-spanning segment. A topological domain (exoplasmic loop) is located at residue lysine 1055. The helical transmembrane segment at 1056–1076 (YWTLLFVGAVVLSLSSYVLMT) threads the bilayer. The Cytoplasmic portion of the chain corresponds to 1077–1104 (SLTQSLWMYRISPKTFPFLFADYNVLFE). Residues 1105-1125 (PCSLLLIVLNVALNVLPMLAL) traverse the membrane as a helical segment. Residues 1126–1335 (RTIHRTVLKQ…SQLEVPRKQS (210 aa)) lie on the Exoplasmic loop side of the membrane. Disordered stretches follow at residues 1192–1215 (VDDS…PLQN), 1236–1280 (FGKG…GKLL), and 1314–1335 (SPLW…RKQS). Polar residues-rich tracts occupy residues 1246–1255 (PNTSSQTMEK) and 1266–1276 (QKLPTTTSATS).

The protein belongs to the cation transport ATPase (P-type) (TC 3.A.3) family. Type IV subfamily. Mg(2+) is required as a cofactor. Expressed in testis, specifically in spermatids within seminiferous tubules (at protein level).

Its subcellular location is the cytoplasmic vesicle. It localises to the secretory vesicle. The protein localises to the acrosome membrane. The protein resides in the endoplasmic reticulum membrane. The enzyme catalyses ATP + H2O + phospholipidSide 1 = ADP + phosphate + phospholipidSide 2.. It catalyses the reaction a 1,2-diacyl-sn-glycero-3-phospho-L-serine(out) + ATP + H2O = a 1,2-diacyl-sn-glycero-3-phospho-L-serine(in) + ADP + phosphate + H(+). P4-ATPase flippase which catalyzes the hydrolysis of ATP coupled to the transport of aminophospholipids from the outer to the inner leaflet of various membranes and ensures the maintenance of asymmetric distribution of phospholipids. Phospholipid translocation also seems to be implicated in vesicle formation and in uptake of lipid signaling molecules. May be responsible for the maintenance of asymmetric distribution of phosphatidylserine (PS) in spermatozoa membranes. Involved in acrosome reactions and binding of spermatozoa to zona pellucida. In Mus musculus (Mouse), this protein is Phospholipid-transporting ATPase IK.